The sequence spans 461 residues: BSD domain-containing protein 1 (461 aa).

2 positions are modified to phosphoserine: S123 and S197. In terms of domain architecture, BSD spans 177–229 (WLSQFCLEEKKGEISELLVGSPSIRALYTKMVPAAVSHSEFWHRYFYKVHQLE). The disordered stretch occupies residues 239 to 384 (KQRAEQSISE…SGPEPRPPAR (146 aa)). Residues 250-259 (PGWEEEEEEL) are compositionally biased toward acidic residues. A compositionally biased stretch (low complexity) spans 295–318 (LVTPVEPPTEVTPSESSESVSLVT). T387 carries the post-translational modification Phosphothreonine. The disordered stretch occupies residues 398–430 (VFELNSDSGKSTPSNNGKKGSSTDISEDWEKDF). Residues 402–421 (NSDSGKSTPSNNGKKGSSTD) are compositionally biased toward polar residues. S418, S419, and S449 each carry phosphoserine.

In Bos taurus (Bovine), this protein is BSD domain-containing protein 1 (BSDC1).